The chain runs to 369 residues: Serpentine receptor class epsilon-45 (369 aa).

Helical transmembrane passes span 1-21, 39-59, 67-87, 127-147, 169-191, 195-217, 258-278, and 291-311; these read MIFLIGNSTSNYTVCFPIFIL, FVLTFVSFYYVIKCCYVAIHI, TVLLIILMIQWFEGLLSNILI, FFLGGFLKWHYILSMITTLLV, GLFFMLVVGQTSTNLVMGYLFFF, HFAVGFSIILSTNIIAMGIFTYV, VIHAGLFLILTACFVNLFMYL, and IFESAINLNPVVIVPTLLGSV.

It belongs to the nematode receptor-like protein sre family.

The protein localises to the membrane. This Caenorhabditis elegans protein is Serpentine receptor class epsilon-45 (sre-45).